A 180-amino-acid chain; its full sequence is D(1A) dopamine receptor (180 aa).

Residues 1-10 form a helical membrane-spanning segment; that stretch reads NTLLVCAAVI. Residues 11-21 are Cytoplasmic-facing; it reads RFRHLRSKVTN. The chain crosses the membrane as a helical span at residues 22-48; sequence FFVISLAVSDLLVAVLVMPWKAVAEIA. At 49-57 the chain is on the extracellular side; the sequence is GFWPFGSFC. C57 and C147 are oxidised to a cystine. A helical membrane pass occupies residues 58 to 80; it reads NIWVAFDIMCSTASILNLCVISV. Topologically, residues 81–99 are cytoplasmic; that stretch reads DRYWAISSPFRYERKMTPK. Residues 100-124 form a helical membrane-spanning segment; it reads AAFILIGVAWTLSVLISFIPVQLSW. The Extracellular segment spans residues 125–153; the sequence is HKAKPTSPPDGNATSLDETVDNCDSSLSR. N136 carries N-linked (GlcNAc...) asparagine glycosylation. A helical membrane pass occupies residues 154–179; it reads TYSISSSLVNFYNPVAIMXVTYTRIH. R180 is a topological domain (cytoplasmic).

Belongs to the G-protein coupled receptor 1 family. As to quaternary structure, interacts with DNAJC14 via its C-terminus. Interacts with DRD2. Interacts with DORIP1.

Its subcellular location is the cell membrane. It localises to the endoplasmic reticulum membrane. It is found in the cell projection. The protein localises to the cilium membrane. Dopamine receptor whose activity is mediated by G proteins which activate adenylyl cyclase. The protein is D(1A) dopamine receptor (DRD1) of Oryctolagus cuniculus (Rabbit).